We begin with the raw amino-acid sequence, 250 residues long: Coproheme decarboxylase (250 aa).

Residues Arg131, 145-149 (YPMNK), His172, and Gln185 contribute to the Fe-coproporphyrin III site. Residue Tyr145 is part of the active site.

The protein belongs to the ChdC family. Type 1 subfamily. The cofactor is Fe-coproporphyrin III.

It catalyses the reaction Fe-coproporphyrin III + 2 H2O2 + 2 H(+) = heme b + 2 CO2 + 4 H2O. The enzyme catalyses Fe-coproporphyrin III + H2O2 + H(+) = harderoheme III + CO2 + 2 H2O. It carries out the reaction harderoheme III + H2O2 + H(+) = heme b + CO2 + 2 H2O. The protein operates within porphyrin-containing compound metabolism; protoheme biosynthesis. In terms of biological role, involved in coproporphyrin-dependent heme b biosynthesis. Catalyzes the decarboxylation of Fe-coproporphyrin III (coproheme) to heme b (protoheme IX), the last step of the pathway. The reaction occurs in a stepwise manner with a three-propionate intermediate. This Staphylococcus aureus (strain MSSA476) protein is Coproheme decarboxylase.